A 183-amino-acid chain; its full sequence is Negative modulator of initiation of replication (183 aa).

Positions 118–122 are interaction with DNA; the sequence is RTRIY.

The protein belongs to the SeqA family. Homodimer. Polymerizes to form helical filaments.

Its subcellular location is the cytoplasm. In terms of biological role, negative regulator of replication initiation, which contributes to regulation of DNA replication and ensures that replication initiation occurs exactly once per chromosome per cell cycle. Binds to pairs of hemimethylated GATC sequences in the oriC region, thus preventing assembly of replication proteins and re-initiation at newly replicated origins. Repression is relieved when the region becomes fully methylated. This is Negative modulator of initiation of replication from Proteus mirabilis (strain HI4320).